A 188-amino-acid chain; its full sequence is UPF0301 protein MCA2336 2 (188 aa).

It belongs to the UPF0301 (AlgH) family.

This is UPF0301 protein MCA2336 2 from Methylococcus capsulatus (strain ATCC 33009 / NCIMB 11132 / Bath).